The sequence spans 434 residues: Citrate synthase (434 aa).

Catalysis depends on residues H310 and D368.

This sequence belongs to the citrate synthase family.

The catalysed reaction is oxaloacetate + acetyl-CoA + H2O = citrate + CoA + H(+). It functions in the pathway carbohydrate metabolism; tricarboxylic acid cycle; isocitrate from oxaloacetate: step 1/2. This chain is Citrate synthase (gltA), found in Bradyrhizobium diazoefficiens (strain JCM 10833 / BCRC 13528 / IAM 13628 / NBRC 14792 / USDA 110).